A 265-amino-acid polypeptide reads, in one-letter code: Chalcone synthase (265 aa).

Residue Cys40 is part of the active site.

This sequence belongs to the thiolase-like superfamily. Chalcone/stilbene synthases family.

It catalyses the reaction (E)-4-coumaroyl-CoA + 3 malonyl-CoA + 3 H(+) = 2',4,4',6'-tetrahydroxychalcone + 3 CO2 + 4 CoA. It functions in the pathway secondary metabolite biosynthesis; flavonoid biosynthesis. Its function is as follows. The primary product of this enzyme is 4,2',4',6'-tetrahydroxychalcone (also termed naringenin-chalcone or chalcone) which can under specific conditions spontaneously isomerize into naringenin. The protein is Chalcone synthase (CHSII) of Medicago sativa (Alfalfa).